Reading from the N-terminus, the 839-residue chain is Taste receptor type 1 member 2 (839 aa).

The first 19 residues, 1–19, serve as a signal peptide directing secretion; that stretch reads MRPRATTICSLFFLLRVLA. At 20-566 the chain is on the extracellular side; sequence EPAKNSDFYL…AFLEWHEAPT (547 aa). Asparagine 84, asparagine 127, asparagine 248, asparagine 292, asparagine 312, asparagine 368, asparagine 428, asparagine 487, and asparagine 527 each carry an N-linked (GlcNAc...) asparagine glycan. Residues 567–587 traverse the membrane as a helical segment; sequence IVVALLAALGFLSTLAILVIF. At 588 to 602 the chain is on the cytoplasmic side; that stretch reads WRHFQTPMVRSAGGP. A helical transmembrane segment spans residues 603–623; the sequence is MCFLMLTLLLVAYMVVPVYVG. Residues 624-635 lie on the Extracellular side of the membrane; sequence PPKVSTCFCRQA. The helical transmembrane segment at 636–656 threads the bilayer; that stretch reads LFPLCFTICISCIAVRSFQIV. Residues 657–681 are Cytoplasmic-facing; the sequence is CVFKMASRFPRAYSYWVRYQGPYVS. Residues 682–702 traverse the membrane as a helical segment; that stretch reads MAFITVLKMVTVVIGMLATGL. Over 703–727 the chain is Extracellular; the sequence is NPTTRIDPDDPKIMIVSCNPNYRNS. Residues 728 to 748 traverse the membrane as a helical segment; that stretch reads LFFNTGLDLLLSVVGFSFAYM. The Cytoplasmic segment spans residues 749–760; it reads GKELPTNYNEAK. The helical transmembrane segment at 761 to 781 threads the bilayer; it reads FITLSMTFYFTSSVSLCTFMS. The Extracellular portion of the chain corresponds to 782-784; sequence AYN. Residues 785 to 805 form a helical membrane-spanning segment; the sequence is GVLVTIMDLLVTVLNLLAISL. The Cytoplasmic portion of the chain corresponds to 806-839; the sequence is GYFGPKCYMILFYPERNTPAYFNSMIQGYTMRRD.

The protein belongs to the G-protein coupled receptor 3 family. TAS1R subfamily. As to quaternary structure, forms heterodimers with TAS1R3.

The protein resides in the cell membrane. Its function is as follows. Putative taste receptor. TAS1R2/TAS1R3 recognizes diverse natural and synthetic sweeteners. This chain is Taste receptor type 1 member 2 (TAS1R2), found in Macaca mulatta (Rhesus macaque).